The following is a 419-amino-acid chain: ATP-dependent RNA helicase RhlB (419 aa).

The Q motif motif lies at 9-37; sequence QRFSDLALHRSVQQAIKEKGFEFCTPIQA. The Helicase ATP-binding domain occupies 40–217; the sequence is LPITLKGQDI…FEHMNDPQYV (178 aa). 53 to 60 is an ATP binding site; it reads AQTGTGKT. Residues 163–166 carry the DEAD box motif; that stretch reads DEAD. The region spanning 241 to 388 is the Helicase C-terminal domain; it reads KMALLMTLLE…VSQYDAKALI (148 aa).

Belongs to the DEAD box helicase family. RhlB subfamily. In terms of assembly, component of the RNA degradosome, which is a multiprotein complex involved in RNA processing and mRNA degradation.

The protein resides in the cytoplasm. The catalysed reaction is ATP + H2O = ADP + phosphate + H(+). Functionally, DEAD-box RNA helicase involved in RNA degradation. Has RNA-dependent ATPase activity and unwinds double-stranded RNA. This is ATP-dependent RNA helicase RhlB from Histophilus somni (strain 129Pt) (Haemophilus somnus).